The sequence spans 273 residues: Cell division protein ZipA (273 aa).

Met-1 is a topological domain (periplasmic). Residues 2-22 (EFGLREWLIVIGIIVIAGILF) form a helical membrane-spanning segment. Topologically, residues 23–273 (DGWRRMRGGK…FERRQLTQKR (251 aa)) are cytoplasmic. Residues 65–125 (EMEPQLDEDD…QEPKKSAKLS (61 aa)) form a disordered region. The span at 111–120 (VDDKPQEPKK) shows a compositional bias: basic and acidic residues.

This sequence belongs to the ZipA family. Interacts with FtsZ via their C-terminal domains.

Its subcellular location is the cell inner membrane. Essential cell division protein that stabilizes the FtsZ protofilaments by cross-linking them and that serves as a cytoplasmic membrane anchor for the Z ring. Also required for the recruitment to the septal ring of downstream cell division proteins. The polypeptide is Cell division protein ZipA (Ectopseudomonas mendocina (strain ymp) (Pseudomonas mendocina)).